A 216-amino-acid chain; its full sequence is Protein-L-isoaspartate O-methyltransferase (216 aa).

Residue S63 is part of the active site.

The protein belongs to the methyltransferase superfamily. L-isoaspartyl/D-aspartyl protein methyltransferase family.

Its subcellular location is the cytoplasm. It carries out the reaction [protein]-L-isoaspartate + S-adenosyl-L-methionine = [protein]-L-isoaspartate alpha-methyl ester + S-adenosyl-L-homocysteine. In terms of biological role, catalyzes the methyl esterification of L-isoaspartyl residues in peptides and proteins that result from spontaneous decomposition of normal L-aspartyl and L-asparaginyl residues. It plays a role in the repair and/or degradation of damaged proteins. The chain is Protein-L-isoaspartate O-methyltransferase from Rhodopseudomonas palustris (strain BisB18).